The following is a 107-amino-acid chain: Auxin-responsive protein SAUR50 (107 aa).

This sequence belongs to the ARG7 family. Interacts with BZR1. In terms of tissue distribution, expressed in cotyledons, leaves, flowers and siliques.

It localises to the cell membrane. Provide a mechanistic link between auxin and plasma membrane H(+)-ATPases (PM H(+)-ATPases, e.g. AHA1 and AHA2), and triggers PM H(+)-ATPases activity by promoting phosphorylation of their C-terminal autoinhibitory domain as a result of PP2C-D subfamily of type 2C phosphatases inhibition, thus leading to the acidification of the apoplast and the facilitation of solutes and water uptake to drive cell expansion. Triggers plant growth probably by promoting cell elongation. Regulates branch angles and bending. Effector of hormonal and environmental signals in plant growth. This is Auxin-responsive protein SAUR50 from Arabidopsis thaliana (Mouse-ear cress).